Reading from the N-terminus, the 108-residue chain is Small ribosomal subunit protein uS10 (108 aa).

Belongs to the universal ribosomal protein uS10 family. As to quaternary structure, part of the 30S ribosomal subunit.

In terms of biological role, involved in the binding of tRNA to the ribosomes. The polypeptide is Small ribosomal subunit protein uS10 (Ehrlichia canis (strain Jake)).